The following is a 446-amino-acid chain: Tubulin beta-4 chain (446 aa).

Residues glutamine 11, glutamate 69, serine 138, glycine 142, threonine 143, glycine 144, asparagine 204, and asparagine 226 each coordinate GTP. Glutamate 69 is a binding site for Mg(2+). The span at 417–426 shows a compositional bias: polar residues; it reads DLVSEYQQYQ. Positions 417 to 446 are disordered; the sequence is DLVSEYQQYQDATADEEGDYEDEDEALHDE. The span at 429-446 shows a compositional bias: acidic residues; the sequence is TADEEGDYEDEDEALHDE.

This sequence belongs to the tubulin family. In terms of assembly, dimer of alpha and beta chains. A typical microtubule is a hollow water-filled tube with an outer diameter of 25 nm and an inner diameter of 15 nM. Alpha-beta heterodimers associate head-to-tail to form protofilaments running lengthwise along the microtubule wall with the beta-tubulin subunit facing the microtubule plus end conferring a structural polarity. Microtubules usually have 13 protofilaments but different protofilament numbers can be found in some organisms and specialized cells. Mg(2+) serves as cofactor.

It localises to the cytoplasm. Its subcellular location is the cytoskeleton. In terms of biological role, tubulin is the major constituent of microtubules, a cylinder consisting of laterally associated linear protofilaments composed of alpha- and beta-tubulin heterodimers. Microtubules grow by the addition of GTP-tubulin dimers to the microtubule end, where a stabilizing cap forms. Below the cap, tubulin dimers are in GDP-bound state, owing to GTPase activity of alpha-tubulin. The chain is Tubulin beta-4 chain (TUBB4) from Eleusine indica (Goosegrass).